Consider the following 417-residue polypeptide: Snake venom metalloproteinase acutolysin-C (417 aa).

Positions 1 to 20 (MIQVLLVTICLAALPYQGSS) are cleaved as a signal peptide. The propeptide at 21–189 (IMLESGKVND…KRPSRLNLTP (169 aa)) is activation peptide. The Peptidase M12B domain maps to 197-392 (TSVNLQLIVD…KKPKCIHKKS (196 aa)). Disulfide bonds link Cys308/Cys387, Cys349/Cys371, and Cys351/Cys354. His333 contributes to the Zn(2+) binding site. Glu334 is a catalytic residue. Residues His337 and His343 each coordinate Zn(2+). The propeptide occupies 393–417 (LKTDTVSTSVSGNEPLDDNVDGFHA). A disordered region spans residues 398 to 417 (VSTSVSGNEPLDDNVDGFHA). The segment covering 407–417 (PLDDNVDGFHA) has biased composition (acidic residues).

The protein belongs to the venom metalloproteinase (M12B) family. P-I subfamily. As to quaternary structure, monomer. The cofactor is Zn(2+). In terms of tissue distribution, expressed by the venom gland.

The protein localises to the secreted. In terms of biological role, this protein is an alkaline zinc metalloprotease from snake venom that possesses weak hemorrhagic activity. This chain is Snake venom metalloproteinase acutolysin-C, found in Deinagkistrodon acutus (Hundred-pace snake).